We begin with the raw amino-acid sequence, 449 residues long: MITIKKGLDLPIAGTPAQVIHNGNTVNEVATLGEEYVGMRPSMKVREGDVVKKGQVLFEDKKNPGVVFTAPASGTVVTINRGEKRVLQSVVIKVEGDEQITFTRYEAAQLASLSAEQVKQNLIESGLWTAFRTRPFSKVPALDAIPSSIFVNAMDTNPLAADPEVVLKEYETDFKDGLTVLTRLFNGQKPVYLCKDADSNIPLSPAIEGITIKSFSGVHPAGLVGTHIHFVDPVGATKQVWHLNYQDVIAIGKLFTTGELFTDRIISLAGPQVKNPRLVRTRLGANLSQLTANELNAGENRVISGSVLSGATAAGPVDYLGRYALQVSVLAEGREKELFGWIMPGSDKFSITRTVLGHFGKKLFNFTTAVHGGERAMVPIGAYERVMPLDIIPTLLLRDLAAGDTDSAQNLGCLELDEEDLALCTYVCPGKNNYGPMLRAALEKIEKEG.

Belongs to the NqrA family. In terms of assembly, composed of six subunits; NqrA, NqrB, NqrC, NqrD, NqrE and NqrF.

The catalysed reaction is a ubiquinone + n Na(+)(in) + NADH + H(+) = a ubiquinol + n Na(+)(out) + NAD(+). In terms of biological role, NQR complex catalyzes the reduction of ubiquinone-1 to ubiquinol by two successive reactions, coupled with the transport of Na(+) ions from the cytoplasm to the periplasm. NqrA to NqrE are probably involved in the second step, the conversion of ubisemiquinone to ubiquinol. The protein is Na(+)-translocating NADH-quinone reductase subunit A of Actinobacillus pleuropneumoniae serotype 3 (strain JL03).